The following is a 131-amino-acid chain: QRFP-like peptide (131 aa).

An N-terminal signal peptide occupies residues 1–25; that stretch reads MGVRVMRSRICVIGLLVLMLTQSEA. A propeptide spanning residues 26–94 is cleaved from the precursor; it reads YSFREKSWRT…DDGISPADKR (69 aa). The segment at 48-131 is disordered; it reads RRDGGDQAPS…RESRRSFGSD (84 aa). Residues 97–106 are compositionally biased toward polar residues; the sequence is MLQQLAQQLK. Phenylalanine 119 carries the post-translational modification Phenylalanine amide. Over residues 120 to 131 the composition is skewed to basic and acidic residues; it reads GKRESRRSFGSD. Residues 123-131 constitute a propeptide that is removed on maturation; it reads ESRRSFGSD.

It belongs to the RFamide neuropeptide family.

The protein localises to the secreted. Ligand for the G-protein coupled receptor QRFPR. The polypeptide is QRFP-like peptide (Branchiostoma floridae (Florida lancelet)).